The sequence spans 285 residues: MTAQNIDGTLISQTVRSEVAARVKARVAAGLRAPGLAVVLVGEDPASQVYVGSKRRACEEVGFVSKSFDLPASTSEEELLALIDELNNDAEIDGILVQLPLPAGIDSTHVLESIHPEKDVDGFHPYNVGRLAQRIPKLRSCTPKGIITLLERYNIALRGKHAVIVGASNIVGRPMTLELLLAGCTTTTCHRFTKDLEGHVRQADVLVVAVGKPNFIPGEWVKEGAIVVDVGINRLESGKLIGDVEYNKARERASFITPVPGGVGPMTVASLIENTMLACEQYHTK.

Residues 166 to 168 and Ile232 each bind NADP(+); that span reads GAS.

It belongs to the tetrahydrofolate dehydrogenase/cyclohydrolase family. As to quaternary structure, homodimer.

It catalyses the reaction (6R)-5,10-methylene-5,6,7,8-tetrahydrofolate + NADP(+) = (6R)-5,10-methenyltetrahydrofolate + NADPH. The enzyme catalyses (6R)-5,10-methenyltetrahydrofolate + H2O = (6R)-10-formyltetrahydrofolate + H(+). It functions in the pathway one-carbon metabolism; tetrahydrofolate interconversion. Functionally, catalyzes the oxidation of 5,10-methylenetetrahydrofolate to 5,10-methenyltetrahydrofolate and then the hydrolysis of 5,10-methenyltetrahydrofolate to 10-formyltetrahydrofolate. This is Bifunctional protein FolD from Vibrio vulnificus (strain CMCP6).